The sequence spans 640 residues: MRRERQRMMSFEDKDKDDLDNSNSNNSSEMTDTAMMPPLKRLLITGSSDDLAQGSSGKKKMTMATRSPSSSPDLATNDSGTRVQPLPEYNFTKFCYRHNPDIQFSPTHTACYKQDLKRTQEINANIAKLPLQEQSDIHHIISKYSNSNDKIRKLILDGILSTSCFPQLSYISSLVTHMIKIDFISILPQELSLKILSYLDCQSLCNATRVCRKWQKLADDDRVWYHMCEQHIDRKCPNCGWGLPLLHMKRARIQQNSTGSSSNADIQTQTTRPWKVIYRERFKVESNWRKGHCRIQEFKGHMDGVLTLQFNYRLLFTGSYDSTIGIWDLFTGKLIRRLSGHSDGVKTLYFDDRKLITGSLDKTIRVWNYITGECISTYRGHSDSVLSVDSYQKVIVSGSADKTVKVWHVESRTCYTLRGHTEWVNCVKLHPKSFSCFSCSDDTTIRMWDIRTNSCLKVFRGHVGQVQKIIPLTIKDVENLATDNTSDGSSPQDDPTMTDGADESDTPSNEQETVLDENIPYPTHLLSCGLDNTIKLWDVKTGKCIRTQFGHVEGVWDIAADNFRIISGSHDGSIKVWDLQSGKCMHTFNGRRLQRETQHTQTQSLGDKVAPIACVCIGDSECFSGDEFGCVKMYKFDLND.

The span at 1-19 (MRRERQRMMSFEDKDKDDL) shows a compositional bias: basic and acidic residues. The interval 1-84 (MRRERQRMMS…ATNDSGTRVQ (84 aa)) is disordered. The interval 1 to 299 (MRRERQRMMS…KGHCRIQEFK (299 aa)) is necessary to mediate nuclear localization. Polar residues-rich tracts occupy residues 45-56 (TGSSDDLAQGSS) and 64-82 (ATRSPSSSPDLATNDSGTR). A Phosphoserine modification is found at S67. An interaction with SKP1/CBF3D region spans residues 180–225 (KIDFISILPQELSLKILSYLDCQSLCNATRVCRKWQKLADDDRVWY). The tract at residues 180 to 277 (KIDFISILPQ…TQTTRPWKVI (98 aa)) is important for mediating homomultimerization. An F-box domain is found at 181–227 (IDFISILPQELSLKILSYLDCQSLCNATRVCRKWQKLADDDRVWYHM). The interaction with MET4 stretch occupies residues 277-640 (IYRERFKVES…VKMYKFDLND (364 aa)). WD repeat units follow at residues 300–328 (GHMDGVLTLQFNYRLLFTGSYDSTIGIWD), 340–368 (GHSDGVKTLYFDDRKLITGSLDKTIRVWN), 380–408 (GHSDSVLSVDSYQKVIVSGSADKTVKVWH), 419–449 (GHTEWVNCVKLHPKSFSCFSCSDDTTIRMWD), 461–499 (GHVGQVQKIIPLTIKDVENLATDNTSDGSSPQDDPTMTD), 509–538 (NEQETVLDENIPYPTHLLSCGLDNTIKLWD), 550–578 (GHVEGVWDIAADNFRIISGSHDGSIKVWD), and 607–635 (DKVAPIACVCIGDSECFSGDEFGCVKMYK). Positions 481–495 (ATDNTSDGSSPQDDP) are enriched in polar residues. Residues 481-516 (ATDNTSDGSSPQDDPTMTDGADESDTPSNEQETVLD) are disordered.

The protein belongs to the WD repeat MET30/SCONB/SCON-2 family. In terms of assembly, homomultimer. Interacts with CDC53 and SKP1/CBF3D to form the E3 ubiquitin ligase complex SCF(Met30). Interacts with MET4.

The protein localises to the cytoplasm. It is found in the nucleus. It functions in the pathway protein modification; protein ubiquitination. Its function is as follows. Substrate-recognition component of the SCF(Met30) complex, an E3 ubiquitin ligase complex that mediates the ubiquitination and subsequent proteasomal degradation of target proteins. Negatively regulates sulfur amino acids biosynthesis genes expression. Controls cell cycle function (being required for the G1/S transition and M-phase but not the S-phase), sulfur metabolism, and methionine biosynthesis as part of the SCF(Met30) complex. Required for the efficient binding of CDC45 and MCM proteins to origins of replication. Required for efficient expression of G1 cyclins. The SCF(Met30) complex catalyzes ubiquitination and degradation of the Cdk-inhibitory kinase SWE1. Involved in the S-adenosylmethionine (AdoMet)-mediated inhibition of the transcription function of MET4. The SCF(Met30) complex mediates ubiquitination and subsequent degradation of MET4 and the cellular response to cadmium. The SCF(Met30) complex acts as an inhibitor of autophagy by promoting ubiquitination and degradation of ATG9 in normal conditions. In Saccharomyces cerevisiae (strain ATCC 204508 / S288c) (Baker's yeast), this protein is F-box protein MET30.